A 245-amino-acid chain; its full sequence is UPF0328 protein ECU09_2010 (245 aa).

The protein belongs to the UPF0328 family.

The protein is UPF0328 protein ECU09_2010 of Encephalitozoon cuniculi (strain GB-M1) (Microsporidian parasite).